Reading from the N-terminus, the 100-residue chain is MFAVIQTGGKQYKVASGDVIRVEKLAGEAGAEVVLDQVLMVGDKIGVPVVAGASVKATVVAQARGEKIIVFKKRRRQNSRRKNGHRQDLTILRITDISAG.

It belongs to the bacterial ribosomal protein bL21 family. As to quaternary structure, part of the 50S ribosomal subunit. Contacts protein L20.

This protein binds to 23S rRNA in the presence of protein L20. In Paramagnetospirillum magneticum (strain ATCC 700264 / AMB-1) (Magnetospirillum magneticum), this protein is Large ribosomal subunit protein bL21.